The chain runs to 734 residues: Photosystem I P700 chlorophyll a apoprotein A2 (734 aa).

The next 8 membrane-spanning stretches (helical) occupy residues 46–69 (IFAS…FHVA), 135–158 (LYTG…LHLQ), 175–199 (LNHH…HVAI), 273–291 (MAHH…GHMY), 330–353 (IHFQ…QHMY), 369–395 (AALY…IFFI), 417–439 (AIIS…LYVH), and 517–535 (FLVH…LILV). The [4Fe-4S] cluster site is built by Cys-559 and Cys-568. Transmembrane regions (helical) follow at residues 575-596 (AFYL…YWHW) and 643-665 (LSVW…MFLI). 3 residues coordinate chlorophyll a: His-654, Met-662, and Tyr-670. A phylloquinone-binding site is contributed by Trp-671. Residues 707-727 (LVGLAHFSVGYIFTYAAFLIA) traverse the membrane as a helical segment.

It belongs to the PsaA/PsaB family. As to quaternary structure, the PsaA/B heterodimer binds the P700 chlorophyll special pair and subsequent electron acceptors. PSI consists of a core antenna complex that captures photons, and an electron transfer chain that converts photonic excitation into a charge separation. The eukaryotic PSI reaction center is composed of at least 11 subunits. P700 is a chlorophyll a/chlorophyll a' dimer, A0 is one or more chlorophyll a, A1 is one or both phylloquinones and FX is a shared 4Fe-4S iron-sulfur center. serves as cofactor.

Its subcellular location is the plastid. The protein localises to the chloroplast thylakoid membrane. The catalysed reaction is reduced [plastocyanin] + hnu + oxidized [2Fe-2S]-[ferredoxin] = oxidized [plastocyanin] + reduced [2Fe-2S]-[ferredoxin]. PsaA and PsaB bind P700, the primary electron donor of photosystem I (PSI), as well as the electron acceptors A0, A1 and FX. PSI is a plastocyanin-ferredoxin oxidoreductase, converting photonic excitation into a charge separation, which transfers an electron from the donor P700 chlorophyll pair to the spectroscopically characterized acceptors A0, A1, FX, FA and FB in turn. Oxidized P700 is reduced on the lumenal side of the thylakoid membrane by plastocyanin. This is Photosystem I P700 chlorophyll a apoprotein A2 from Arabis hirsuta (Hairy rock-cress).